A 219-amino-acid chain; its full sequence is Protein-L-isoaspartate O-methyltransferase (219 aa).

Ser67 is an active-site residue.

Belongs to the methyltransferase superfamily. L-isoaspartyl/D-aspartyl protein methyltransferase family.

The protein localises to the cytoplasm. The enzyme catalyses [protein]-L-isoaspartate + S-adenosyl-L-methionine = [protein]-L-isoaspartate alpha-methyl ester + S-adenosyl-L-homocysteine. Functionally, catalyzes the methyl esterification of L-isoaspartyl residues in peptides and proteins that result from spontaneous decomposition of normal L-aspartyl and L-asparaginyl residues. It plays a role in the repair and/or degradation of damaged proteins. In Cereibacter sphaeroides (strain ATCC 17029 / ATH 2.4.9) (Rhodobacter sphaeroides), this protein is Protein-L-isoaspartate O-methyltransferase.